The sequence spans 942 residues: Valine--tRNA ligase (942 aa).

The 'HIGH' region motif lies at Pro43–His53. A 'KMSKS' region motif is present at residues Lys551–Ser555. Residue Lys554 coordinates ATP. Residues Glu876–Leu942 adopt a coiled-coil conformation.

The protein belongs to the class-I aminoacyl-tRNA synthetase family. ValS type 1 subfamily. Monomer.

Its subcellular location is the cytoplasm. It catalyses the reaction tRNA(Val) + L-valine + ATP = L-valyl-tRNA(Val) + AMP + diphosphate. Its function is as follows. Catalyzes the attachment of valine to tRNA(Val). As ValRS can inadvertently accommodate and process structurally similar amino acids such as threonine, to avoid such errors, it has a 'posttransfer' editing activity that hydrolyzes mischarged Thr-tRNA(Val) in a tRNA-dependent manner. In Stenotrophomonas maltophilia (strain R551-3), this protein is Valine--tRNA ligase.